The sequence spans 129 residues: uncharacterized protein (129 aa).

This is an uncharacterized protein from Oryza sativa subsp. indica (Rice).